We begin with the raw amino-acid sequence, 240 residues long: Probable transcriptional regulatory protein VFMJ11_A0186 (240 aa).

Belongs to the TACO1 family.

It is found in the cytoplasm. This Aliivibrio fischeri (strain MJ11) (Vibrio fischeri) protein is Probable transcriptional regulatory protein VFMJ11_A0186.